The following is a 152-amino-acid chain: Putative RING finger protein 157L (152 aa).

Residues 111–146 form an RING-type zinc finger; the sequence is CVVCYENEICIKIQPCNHFVVCKSCFNRLNTCPMCR.

This sequence belongs to the IIV-6 157L family.

The polypeptide is Putative RING finger protein 157L (Invertebrate iridescent virus 6 (IIV-6)).